The chain runs to 343 residues: General transcription and DNA repair factor IIH subunit TFB6 (343 aa).

Position 69 is a phosphotyrosine (Tyr-69). Residues Thr-71 and Thr-84 each carry the phosphothreonine modification. Phosphoserine is present on residues Ser-104, Ser-105, Ser-108, and Ser-342.

As to quaternary structure, component of the general transcription factor TFIIH, composed of a 7-subunit TFIIH core complex composed of XPB/SSL2, XPD/RAD3, SSL1, TFB1, TFB2, TFB4 and TFB5 which is active in NER; the 3-subunit CTD-kinase module TFIIK composed of CCL1, KIN28, and TFB3 which is active in transcription; as well as TFB6 that regulates SSL2 association with the complex. Phosphorylation leads the dissociation of from SSL2.

The protein resides in the cytoplasm. Its subcellular location is the nucleus. Its function is as follows. Component of the general transcription and DNA repair factor IIH (TFIIH) core complex, which is involved in general and transcription-coupled nucleotide excision repair (NER) of damaged DNA and, when complexed to TFIIK, in RNA transcription by RNA polymerase II. In NER, TFIIH acts by opening DNA around the lesion to allow the excision of the damaged oligonucleotide and its replacement by a new DNA fragment. In transcription, TFIIH has an essential role in transcription initiation. When the pre-initiation complex (PIC) has been established, TFIIH is required for promoter opening and promoter escape. Phosphorylation of the C-terminal tail (CTD) of the largest subunit of RNA polymerase II by the kinase module TFIIK controls the initiation of transcription. TFB6 facilitates dissociation of the SSL2 helicase from TFIIH after transcription initiation. This Saccharomyces cerevisiae (strain ATCC 204508 / S288c) (Baker's yeast) protein is General transcription and DNA repair factor IIH subunit TFB6.